A 443-amino-acid polypeptide reads, in one-letter code: Nuclear distribution protein nudF (443 aa).

The 33-residue stretch at 9–41 (QAEELHKSIIAYLSSINASRSCEVLREELQVDS) folds into the LisH domain. Residues 60–87 (TGIARLQKKILDLESKLAGLQTELDTIS) adopt a coiled-coil conformation. WD repeat units follow at residues 111-152 (SHRD…RTLK), 154-194 (HMRP…ANVR), 198-238 (GHDH…CVKV), 241-280 (SQGS…SVAS), 283-343 (GHEN…IKTL), 345-384 (GHDN…RLVK), 388-427 (AHGH…PGFQ), and 429-443 (VIAT…RIFT).

Belongs to the WD repeat LIS1/nudF family. In terms of assembly, self-associates. Interacts with nudE and dynein.

The protein resides in the cytoplasm. It is found in the cytoskeleton. It localises to the spindle pole. Its function is as follows. Positively regulates the activity of the minus-end directed microtubule motor protein dynein. May enhance dynein-mediated microtubule sliding by targeting dynein to the microtubule plus end. Required for nuclear migration during vegetative growth as well as development. Required for retrograde early endosome (EE) transport from the hyphal tip. Required for localization of dynein to the mitotic spindle poles. Recruits additional proteins to the dynein complex at SPBs. This Aspergillus niger (strain ATCC MYA-4892 / CBS 513.88 / FGSC A1513) protein is Nuclear distribution protein nudF.